Here is a 271-residue protein sequence, read N- to C-terminus: Integral membrane protein 2C (271 aa).

Residue Thr41 is modified to Phosphothreonine. A helical; Signal-anchor for type II membrane protein membrane pass occupies residues 59–79; the sequence is VGGVCYLSMGMVVLLMGLVFA. Residues 140 to 234 form the BRICHOS domain; the sequence is FGGGDPADII…LCSGKDTYRL (95 aa). Cys167 and Cys226 are disulfide-bonded. N-linked (GlcNAc...) asparagine glycosylation occurs at Asn173.

The protein belongs to the ITM2 family. As to quaternary structure, interacts with BACE1. Interacts with APP. Interacts with STMN2. In terms of processing, type I membrane-bound, as well as soluble, furin has a pre-eminent role in ITM2C proteolytic processing. PCSK7 and PCSK5 may also be involved although to a lesser extent. The soluble form of PCSK7 is incapable of processing ITM2C. Fails to undergo shedding by ADAM10 and intramembrane cleavage by SPPL2B.

It localises to the lysosome membrane. The protein resides in the cell membrane. Its function is as follows. Negative regulator of amyloid-beta peptide production. May inhibit the processing of APP by blocking its access to alpha- and beta-secretase. Binding to the beta-secretase-cleaved APP C-terminal fragment is negligible, suggesting that ITM2C is a poor gamma-secretase cleavage inhibitor. May play a role in TNF-induced cell death and neuronal differentiation. This chain is Integral membrane protein 2C (ITM2C), found in Bos taurus (Bovine).